The following is a 369-amino-acid chain: Anhydro-N-acetylmuramic acid kinase (369 aa).

12–19 (GTSLDGVD) is a binding site for ATP.

The protein belongs to the anhydro-N-acetylmuramic acid kinase family.

The catalysed reaction is 1,6-anhydro-N-acetyl-beta-muramate + ATP + H2O = N-acetyl-D-muramate 6-phosphate + ADP + H(+). The protein operates within amino-sugar metabolism; 1,6-anhydro-N-acetylmuramate degradation. It participates in cell wall biogenesis; peptidoglycan recycling. Catalyzes the specific phosphorylation of 1,6-anhydro-N-acetylmuramic acid (anhMurNAc) with the simultaneous cleavage of the 1,6-anhydro ring, generating MurNAc-6-P. Is required for the utilization of anhMurNAc either imported from the medium or derived from its own cell wall murein, and thus plays a role in cell wall recycling. This Escherichia coli O81 (strain ED1a) protein is Anhydro-N-acetylmuramic acid kinase.